A 197-amino-acid chain; its full sequence is Phosphoheptose isomerase (197 aa).

The SIS domain occupies 34-196; it reads MVNCLLGGNK…DRTLFPQDEQ (163 aa). 49 to 51 serves as a coordination point for substrate; that stretch reads NGG. The Zn(2+) site is built by histidine 58 and glutamate 62. Substrate contacts are provided by residues glutamate 62, 91 to 92, 117 to 119, serine 122, and glutamine 172; these read ND and STS. 2 residues coordinate Zn(2+): glutamine 172 and histidine 180.

Belongs to the SIS family. GmhA subfamily. Homotetramer. It depends on Zn(2+) as a cofactor.

The protein resides in the cytoplasm. It carries out the reaction 2 D-sedoheptulose 7-phosphate = D-glycero-alpha-D-manno-heptose 7-phosphate + D-glycero-beta-D-manno-heptose 7-phosphate. It participates in carbohydrate biosynthesis; D-glycero-D-manno-heptose 7-phosphate biosynthesis; D-glycero-alpha-D-manno-heptose 7-phosphate and D-glycero-beta-D-manno-heptose 7-phosphate from sedoheptulose 7-phosphate: step 1/1. Its function is as follows. Catalyzes the isomerization of sedoheptulose 7-phosphate in D-glycero-D-manno-heptose 7-phosphate. In Shewanella pealeana (strain ATCC 700345 / ANG-SQ1), this protein is Phosphoheptose isomerase.